A 162-amino-acid chain; its full sequence is Peptidyl-prolyl cis-trans isomerase-like 1 (162 aa).

The PPIase cyclophilin-type domain maps to 1–155 (MATDVTFDTS…DEVKILRAKV (155 aa)).

Belongs to the cyclophilin-type PPIase family. PPIL1 subfamily.

It carries out the reaction [protein]-peptidylproline (omega=180) = [protein]-peptidylproline (omega=0). Its function is as follows. PPIases accelerate the folding of proteins. It catalyzes the cis-trans isomerization of proline imidic peptide bonds in oligopeptides. The chain is Peptidyl-prolyl cis-trans isomerase-like 1 (cyp1) from Emericella nidulans (strain FGSC A4 / ATCC 38163 / CBS 112.46 / NRRL 194 / M139) (Aspergillus nidulans).